The chain runs to 40 residues: Antimicrobial peptide 2 (40 aa).

In terms of domain architecture, Chitin-binding type-1 spans 1-40 (AQCGAQGGGATCPGGLCCSQWGWCGSTPKYCGAGCQSNCR). Cystine bridges form between Cys-3-Cys-18, Cys-12-Cys-24, Cys-17-Cys-31, and Cys-35-Cys-39.

Post-translationally, not glycosylated.

Its function is as follows. Antimicrobial peptide active against plant pathogenic fungi and Gram-negative and -positive bacteria. The protein is Antimicrobial peptide 2 of Fagopyrum esculentum (Common buckwheat).